A 315-amino-acid chain; its full sequence is Methionyl-tRNA formyltransferase (315 aa).

113–116 (SLLP) provides a ligand contact to (6S)-5,6,7,8-tetrahydrofolate.

It belongs to the Fmt family.

It catalyses the reaction L-methionyl-tRNA(fMet) + (6R)-10-formyltetrahydrofolate = N-formyl-L-methionyl-tRNA(fMet) + (6S)-5,6,7,8-tetrahydrofolate + H(+). In terms of biological role, attaches a formyl group to the free amino group of methionyl-tRNA(fMet). The formyl group appears to play a dual role in the initiator identity of N-formylmethionyl-tRNA by promoting its recognition by IF2 and preventing the misappropriation of this tRNA by the elongation apparatus. This Escherichia coli O139:H28 (strain E24377A / ETEC) protein is Methionyl-tRNA formyltransferase.